The sequence spans 508 residues: Maturase K (508 aa).

Belongs to the intron maturase 2 family. MatK subfamily.

The protein localises to the plastid. Its subcellular location is the chloroplast. In terms of biological role, usually encoded in the trnK tRNA gene intron. Probably assists in splicing its own and other chloroplast group II introns. This chain is Maturase K, found in Ranunculus lingua (Greater spearwort).